Here is a 442-residue protein sequence, read N- to C-terminus: O-acetyl-L-homoserine sulfhydrylase (442 aa).

The tract at residues 1–32 is disordered; it reads MVGPSGESMPRNFKPETIALHGGQEPDPTTTS. An N6-(pyridoxal phosphate)lysine modification is found at Lys-216.

This sequence belongs to the trans-sulfuration enzymes family. Requires pyridoxal 5'-phosphate as cofactor.

The enzyme catalyses O-acetyl-L-homoserine + hydrogen sulfide = L-homocysteine + acetate. It participates in amino-acid biosynthesis; L-methionine biosynthesis via de novo pathway; L-homocysteine from O-acetyl-L-homoserine: step 1/1. Feedback inhibited at very high concentrations of methionine or S-adenosylmethionine. Its function is as follows. Catalyzes the conversion of O-acetyl-L-homoserine (OAH) into homocysteine in the methionine biosynthesis pathway. Can also use O-succinyl-homoserine (OSH), although at low efficiency. The protein is O-acetyl-L-homoserine sulfhydrylase of Leptospira meyeri.